Here is a 375-residue protein sequence, read N- to C-terminus: Homoserine O-succinyltransferase (375 aa).

The region spanning 48–358 (NAVLVCHALS…DAGHDSFLLD (311 aa)) is the AB hydrolase-1 domain. Residue serine 154 is the Nucleophile of the active site. Arginine 224 contributes to the substrate binding site. Active-site residues include aspartate 319 and histidine 352. Aspartate 353 provides a ligand contact to substrate.

The protein belongs to the AB hydrolase superfamily. MetX family. Homodimer.

Its subcellular location is the cytoplasm. It catalyses the reaction L-homoserine + succinyl-CoA = O-succinyl-L-homoserine + CoA. It participates in amino-acid biosynthesis; L-methionine biosynthesis via de novo pathway; O-succinyl-L-homoserine from L-homoserine: step 1/1. In terms of biological role, transfers a succinyl group from succinyl-CoA to L-homoserine, forming succinyl-L-homoserine. The sequence is that of Homoserine O-succinyltransferase from Aromatoleum aromaticum (strain DSM 19018 / LMG 30748 / EbN1) (Azoarcus sp. (strain EbN1)).